Here is a 451-residue protein sequence, read N- to C-terminus: Bifunctional protein GlmU (451 aa).

A pyrophosphorylase region spans residues methionine 1–lysine 232. UDP-N-acetyl-alpha-D-glucosamine is bound by residues leucine 11–glycine 14, lysine 25, glutamine 78, and glycine 83–threonine 84. Aspartate 108 serves as a coordination point for Mg(2+). UDP-N-acetyl-alpha-D-glucosamine-binding residues include glycine 144, glutamate 158, asparagine 173, and asparagine 230. Asparagine 230 contacts Mg(2+). The tract at residues alanine 233–alanine 253 is linker. The interval glycine 254 to lysine 451 is N-acetyltransferase. Positions 319 and 337 each coordinate UDP-N-acetyl-alpha-D-glucosamine. Histidine 349 acts as the Proton acceptor in catalysis. The UDP-N-acetyl-alpha-D-glucosamine site is built by tyrosine 352 and asparagine 363. Residues alanine 366, asparagine 372–tyrosine 373, serine 409, and arginine 426 each bind acetyl-CoA.

In the N-terminal section; belongs to the N-acetylglucosamine-1-phosphate uridyltransferase family. It in the C-terminal section; belongs to the transferase hexapeptide repeat family. As to quaternary structure, homotrimer. Mg(2+) serves as cofactor.

It is found in the cytoplasm. It carries out the reaction alpha-D-glucosamine 1-phosphate + acetyl-CoA = N-acetyl-alpha-D-glucosamine 1-phosphate + CoA + H(+). It catalyses the reaction N-acetyl-alpha-D-glucosamine 1-phosphate + UTP + H(+) = UDP-N-acetyl-alpha-D-glucosamine + diphosphate. It functions in the pathway nucleotide-sugar biosynthesis; UDP-N-acetyl-alpha-D-glucosamine biosynthesis; N-acetyl-alpha-D-glucosamine 1-phosphate from alpha-D-glucosamine 6-phosphate (route II): step 2/2. The protein operates within nucleotide-sugar biosynthesis; UDP-N-acetyl-alpha-D-glucosamine biosynthesis; UDP-N-acetyl-alpha-D-glucosamine from N-acetyl-alpha-D-glucosamine 1-phosphate: step 1/1. Its pathway is bacterial outer membrane biogenesis; LPS lipid A biosynthesis. Its function is as follows. Catalyzes the last two sequential reactions in the de novo biosynthetic pathway for UDP-N-acetylglucosamine (UDP-GlcNAc). The C-terminal domain catalyzes the transfer of acetyl group from acetyl coenzyme A to glucosamine-1-phosphate (GlcN-1-P) to produce N-acetylglucosamine-1-phosphate (GlcNAc-1-P), which is converted into UDP-GlcNAc by the transfer of uridine 5-monophosphate (from uridine 5-triphosphate), a reaction catalyzed by the N-terminal domain. In Bradyrhizobium diazoefficiens (strain JCM 10833 / BCRC 13528 / IAM 13628 / NBRC 14792 / USDA 110), this protein is Bifunctional protein GlmU.